A 269-amino-acid chain; its full sequence is MMSPMASILMYTHFRMWKHALNVWSITLFQNFRLTAELIILFTLLNFLFLIPVMNVFAFFIHNVVNFSLIIYFSKLYLKVKGNEEEYKREIERTKLAQALKTYLPHAVTLTFATYAMTVAYLILLFVSLLILGLITGITVFTFGTDFIIAYLIFIVLLLILYFWIITSYPVFFARTVIEGQTPRDFFFLFLTAPFSKLLWKLAFSLEVLFSSFVIGFFSLFIFLFQFVMSHLFPPLFFLTYFVAFSNTLLIYLFGVISVSYLLWKREGK.

Transmembrane regions (helical) follow at residues 21–43 (LNVWSITLFQNFRLTAELIILFT), 48–70 (LFLIPVMNVFAFFIHNVVNFSLI), 121–143 (YLILLFVSLLILGLITGITVFTF), 147–166 (FIIAYLIFIVLLLILYFWII), 205–227 (SLEVLFSSFVIGFFSLFIFLFQF), and 242–264 (FVAFSNTLLIYLFGVISVSYLLW).

It localises to the cell membrane. This is an uncharacterized protein from Aquifex aeolicus (strain VF5).